The sequence spans 275 residues: Large ribosomal subunit protein uL2 (275 aa).

The interval 212 to 275 is disordered; the sequence is NRHRGIRPQT…DKLIISRRKK (64 aa). Residues 257–275 are compositionally biased toward basic residues; sequence YKTRRKKPSDKLIISRRKK.

This sequence belongs to the universal ribosomal protein uL2 family. As to quaternary structure, part of the 50S ribosomal subunit. Forms a bridge to the 30S subunit in the 70S ribosome.

Its function is as follows. One of the primary rRNA binding proteins. Required for association of the 30S and 50S subunits to form the 70S ribosome, for tRNA binding and peptide bond formation. It has been suggested to have peptidyltransferase activity; this is somewhat controversial. Makes several contacts with the 16S rRNA in the 70S ribosome. The polypeptide is Large ribosomal subunit protein uL2 (Nitratiruptor sp. (strain SB155-2)).